Consider the following 200-residue polypeptide: Histone chaperone asf1a-B (200 aa).

This sequence belongs to the ASF1 family. As to quaternary structure, interacts with histone H3 (including both histone H3.1 and H3.3) and histone H4.

The protein localises to the nucleus. Functionally, histone chaperone that facilitates histone deposition and histone exchange and removal during nucleosome assembly and disassembly. This Xenopus laevis (African clawed frog) protein is Histone chaperone asf1a-B (asf1ab).